A 166-amino-acid chain; its full sequence is Large ribosomal subunit protein uL10 (166 aa).

The protein belongs to the universal ribosomal protein uL10 family. As to quaternary structure, part of the ribosomal stalk of the 50S ribosomal subunit. The N-terminus interacts with L11 and the large rRNA to form the base of the stalk. The C-terminus forms an elongated spine to which L12 dimers bind in a sequential fashion forming a multimeric L10(L12)X complex.

Its function is as follows. Forms part of the ribosomal stalk, playing a central role in the interaction of the ribosome with GTP-bound translation factors. The sequence is that of Large ribosomal subunit protein uL10 (rplJ) from Streptococcus pyogenes serotype M18 (strain MGAS8232).